A 270-amino-acid polypeptide reads, in one-letter code: DNA adenine methylase (270 aa).

S-adenosyl-L-methionine contacts are provided by Trp10, Lys14, Asp54, and Asp181.

The protein belongs to the N(4)/N(6)-methyltransferase family.

It carries out the reaction a 2'-deoxyadenosine in DNA + S-adenosyl-L-methionine = an N(6)-methyl-2'-deoxyadenosine in DNA + S-adenosyl-L-homocysteine + H(+). In terms of biological role, an alpha subtype methylase, recognizes the double-stranded sequence 5'-GATC-3' and methylates A-2. Overexpression leads to hypermutability. May be involved in methyl-directed DNA mismatch repair, initiation of chromosome replication and gene expression. This chain is DNA adenine methylase, found in Serratia marcescens.